The chain runs to 123 residues: Small ribosomal subunit protein uS12 (123 aa).

The tract at residues 1 to 32 (MPTINQLIRKPREAQKARDKAPALQSSPQKRG) is disordered. Basic and acidic residues predominate over residues 10 to 21 (KPREAQKARDKA). Asp89 is subject to 3-methylthioaspartic acid.

It belongs to the universal ribosomal protein uS12 family. In terms of assembly, part of the 30S ribosomal subunit. Contacts proteins S8 and S17. May interact with IF1 in the 30S initiation complex.

Its function is as follows. With S4 and S5 plays an important role in translational accuracy. In terms of biological role, interacts with and stabilizes bases of the 16S rRNA that are involved in tRNA selection in the A site and with the mRNA backbone. Located at the interface of the 30S and 50S subunits, it traverses the body of the 30S subunit contacting proteins on the other side and probably holding the rRNA structure together. The combined cluster of proteins S8, S12 and S17 appears to hold together the shoulder and platform of the 30S subunit. In Azorhizobium caulinodans (strain ATCC 43989 / DSM 5975 / JCM 20966 / LMG 6465 / NBRC 14845 / NCIMB 13405 / ORS 571), this protein is Small ribosomal subunit protein uS12.